Here is a 310-residue protein sequence, read N- to C-terminus: NADH-cytochrome b5 reductase 1 (310 aa).

Residues 32–52 traverse the membrane as a helical segment; that stretch reads EWLPYAVALAAILSGGKVFSN. In terms of domain architecture, FAD-binding FR-type spans 61 to 166; sequence TEFQNFELKE…RGPKGAMVYT (106 aa). Residues 146–161 and 172–209 contribute to the FAD site; these read AGLR…GPKG and KIGM…QVDL.

Belongs to the flavoprotein pyridine nucleotide cytochrome reductase family. In terms of assembly, monomer. Component of the 2-(3-amino-3-carboxypropyl)histidine synthase complex composed of DPH1, DPH2, DPH3 and a NADH-dependent reductase, predominantly CBR1. Requires FAD as cofactor.

It is found in the mitochondrion outer membrane. The enzyme catalyses 2 Fe(III)-[cytochrome b5] + NADH = 2 Fe(II)-[cytochrome b5] + NAD(+) + H(+). It carries out the reaction 2 Fe(3+)-[Dph3] + NADH = 2 Fe(2+)-[Dph3] + NAD(+) + H(+). Its pathway is protein modification; peptidyl-diphthamide biosynthesis. In terms of biological role, NADH-dependent reductase for DPH3 and cytochrome b5. Required for the first step of diphthamide biosynthesis, a post-translational modification of histidine which occurs in elongation factor 2. DPH1 and DPH2 transfer a 3-amino-3-carboxypropyl (ACP) group from S-adenosyl-L-methionine (SAM) to a histidine residue, the reaction is assisted by a reduction system comprising DPH3 and a NADH-dependent reductase, predominantly CBR1. By reducing DPH3, also involved in the formation of the tRNA wobble base modification mcm5s 2U (5-methoxycarbonylmethyl-2-thiouridine), mediated by the elongator complex. The cytochrome b5/NADH cytochrome b5 reductase electron transfer system supports the catalytic activity of several sterol biosynthetic enzymes. The protein is NADH-cytochrome b5 reductase 1 (CBR1) of Ajellomyces capsulatus (strain NAm1 / WU24) (Darling's disease fungus).